A 298-amino-acid chain; its full sequence is GTP cyclohydrolase FolE2 (298 aa).

This sequence belongs to the GTP cyclohydrolase IV family.

It carries out the reaction GTP + H2O = 7,8-dihydroneopterin 3'-triphosphate + formate + H(+). The protein operates within cofactor biosynthesis; 7,8-dihydroneopterin triphosphate biosynthesis; 7,8-dihydroneopterin triphosphate from GTP: step 1/1. Functionally, converts GTP to 7,8-dihydroneopterin triphosphate. This is GTP cyclohydrolase FolE2 from Xylella fastidiosa (strain 9a5c).